The chain runs to 210 residues: DNA-directed RNA polymerase subunit 5-like protein 1 (210 aa).

Belongs to the archaeal Rpo5/eukaryotic RPB5 RNA polymerase subunit family.

The protein localises to the nucleus. The sequence is that of DNA-directed RNA polymerase subunit 5-like protein 1 (NRPB5L1) from Arabidopsis thaliana (Mouse-ear cress).